Here is a 62-residue protein sequence, read N- to C-terminus: EKKDEYLSKSSASAAPVIDTLAHGYGKVLGKGRLPEVPVIVKARFVSKLAEEKSESLVVLSN.

This sequence belongs to the universal ribosomal protein uL15 family.

The chain is Large ribosomal subunit protein uL15 (RPL28) from Candida albicans (Yeast).